Consider the following 201-residue polypeptide: FMN-dependent NADH:quinone oxidoreductase (201 aa).

FMN is bound by residues Ser10, 16–18 (SQS), 96–99 (MYNF), and 140–143 (SRGG).

The protein belongs to the azoreductase type 1 family. In terms of assembly, homodimer. It depends on FMN as a cofactor.

The catalysed reaction is 2 a quinone + NADH + H(+) = 2 a 1,4-benzosemiquinone + NAD(+). The enzyme catalyses N,N-dimethyl-1,4-phenylenediamine + anthranilate + 2 NAD(+) = 2-(4-dimethylaminophenyl)diazenylbenzoate + 2 NADH + 2 H(+). Its function is as follows. Quinone reductase that provides resistance to thiol-specific stress caused by electrophilic quinones. Functionally, also exhibits azoreductase activity. Catalyzes the reductive cleavage of the azo bond in aromatic azo compounds to the corresponding amines. This is FMN-dependent NADH:quinone oxidoreductase from Yersinia enterocolitica serotype O:8 / biotype 1B (strain NCTC 13174 / 8081).